Consider the following 5085-residue polypeptide: Linear gramicidin synthase subunit D (5085 aa).

Carrier domains lie at 962–1037 (APRT…AAAG), 2023–2097 (SPST…EEKA), 3544–3619 (APRN…ELLT), and 4601–4676 (APQT…EEII). O-(pantetheine 4'-phosphoryl)serine is present on residues Ser997, Ser2058, Ser3579, and Ser4636.

It belongs to the ATP-dependent AMP-binding enzyme family. Large multienzyme complex composed of 4 subunits; LgrA, LgrB, LgrC and LgrD. Pantetheine 4'-phosphate is required as a cofactor.

Functionally, activates the 13th to the 16th (Trp, D-Leu, Trp and Gly) amino acids in linear gramicidin and catalyzes the formation of the peptide bond between them. This enzyme is also responsible for the epimerization of the 14th (D-Leu) amino acid. It also catalyzes the NAD(P)H-dependent reduction of the C-terminal glycine residue of the N-formylated 16-mer peptide, that binds to the peptidyl carrier domain of the terminal module of this protein, to form a peptidyl-aldehyde intermediate that is released from the enzyme complex. This is Linear gramicidin synthase subunit D (lgrD) from Brevibacillus parabrevis.